A 444-amino-acid polypeptide reads, in one-letter code: C4-dicarboxylate transport protein (444 aa).

9 helical membrane passes run 15-35 (VIVA…FGVA), 46-66 (LIKM…IAGM), 78-98 (YALL…LIVV), 143-163 (IVGA…VIFG), 199-219 (PIGA…GSLV), 224-244 (LMIC…GGIA), 291-311 (VVGL…AIYL), 332-352 (ITLL…TGSG), and 354-374 (IVLA…LALI). Residues 422 to 444 (GIADTRPEDDLGVAEGPTPSNVK) form a disordered region.

This sequence belongs to the dicarboxylate/amino acid:cation symporter (DAACS) (TC 2.A.23) family.

The protein resides in the cell inner membrane. Functionally, responsible for the transport of dicarboxylates such as succinate, fumarate, and malate from the periplasm across the membrane. In Pseudomonas fluorescens (strain Pf0-1), this protein is C4-dicarboxylate transport protein.